A 147-amino-acid polypeptide reads, in one-letter code: MGAELVKWVKSHKIDAHIITFVAKMPYIDSIKLLEAGAKGCVWKTSHPAKLNRAIDSISNGYTYFDSVHMDCEKISSRYSSDNQLTNRESEILQLIADGKTNKEIANFLQLSRKTVETHRLNIMKKLDVHSGIELIKTALRMGVCTI.

The region spanning 1-59 (MGAELVKWVKSHKIDAHIITFVAKMPYIDSIKLLEAGAKGCVWKTSHPAKLNRAIDSIS) is the Response regulatory domain. In terms of domain architecture, HTH luxR-type spans 78–143 (RYSSDNQLTN…ELIKTALRMG (66 aa)). The segment at residues 102-121 (NKEIANFLQLSRKTVETHRL) is a DNA-binding region (H-T-H motif).

Overexpressed protein is phosphorylated in vitro by non-cognate histidine kinases BarA and UhpB.

This is an uncharacterized protein from Escherichia coli (strain K12).